The primary structure comprises 337 residues: Ferredoxin--NADP reductase (337 aa).

FAD is bound by residues Asp33, Gln41, Tyr46, Ala86, Phe120, Asp286, and Thr327.

The protein belongs to the ferredoxin--NADP reductase type 2 family. Homodimer. FAD serves as cofactor.

The catalysed reaction is 2 reduced [2Fe-2S]-[ferredoxin] + NADP(+) + H(+) = 2 oxidized [2Fe-2S]-[ferredoxin] + NADPH. The polypeptide is Ferredoxin--NADP reductase (Rickettsia canadensis (strain McKiel)).